Reading from the N-terminus, the 835-residue chain is Cap-specific mRNA (nucleoside-2'-O-)-methyltransferase 1 (835 aa).

The disordered stretch occupies residues 1–67; it reads MKRRTDPECT…EGKQHSSDSF (67 aa). The Bipartite nuclear localization signal signature appears at 2-19; sequence KRRTDPECTAPIKKQKKR. Residues Ser-28, Ser-31, Ser-53, Ser-66, and Ser-91 each carry the phosphoserine modification. Residues 37–54 are compositionally biased toward polar residues; it reads SSVSHGAKASTTSLSGSD. Residues 57-67 show a composition bias toward basic and acidic residues; it reads TEGKQHSSDSF. In terms of domain architecture, G-patch spans 87 to 133; it reads YNSVSQKLMAKMGFREGEGLGKYSQGRKDIVEASSQKGRRGLGLTLR. Residue Lys-108 is modified to N6-acetyllysine. Substrate contacts are provided by residues 203–207 and Arg-218; that span reads KSVFD. The 220-residue stretch at 231–450 folds into the RrmJ-type SAM-dependent 2'-O-MTase domain; it reads FFLNRAAMKM…ERYVVCKGLK (220 aa). Asn-234 contributes to the S-adenosyl-L-methionine binding site. Lys-239 is an active-site residue. S-adenosyl-L-methionine-binding positions include 277–283 and 335–336; these read CAGPGGF and DI. Residue Asp-364 is part of the active site. 374-376 contributes to the substrate binding site; sequence NLQ. Lys-404 (proton acceptor) is an active-site residue. Asn-439 contacts substrate. The segment at 727–835 is interaction with POLR2A; the sequence is SSGTPKLSYT…VLSFIQMHRA (109 aa). Residues 752–786 enclose the WW domain; the sequence is RTVNEPWTMGFSKSFKKKFFYNKKTKDSTFDLPAD.

As to quaternary structure, interacts with POLR2A (via C-terminus).

The protein resides in the nucleus. The catalysed reaction is a 5'-end (N(7)-methyl 5'-triphosphoguanosine)-ribonucleoside in mRNA + S-adenosyl-L-methionine = a 5'-end (N(7)-methyl 5'-triphosphoguanosine)-(2'-O-methyl-ribonucleoside) in mRNA + S-adenosyl-L-homocysteine + H(+). In terms of biological role, S-adenosyl-L-methionine-dependent methyltransferase that mediates mRNA cap1 2'-O-ribose methylation to the 5'-cap structure of mRNAs. Methylates the ribose of the first nucleotide of a m(7)GpppG-capped mRNA and small nuclear RNA (snRNA) to produce m(7)GpppRm (cap1). Displays a preference for cap0 transcripts. Cap1 modification is linked to higher levels of translation. May be involved in the interferon response pathway. This chain is Cap-specific mRNA (nucleoside-2'-O-)-methyltransferase 1 (CMTR1), found in Homo sapiens (Human).